Consider the following 243-residue polypeptide: Probable fructoselysine utilization operon transcriptional repressor (243 aa).

The HTH gntR-type domain maps to 10 to 78 (QLLYATVRQR…QGKGTFVQSQ (69 aa)). The segment at residues 38 to 57 (ENELCTQYNVSRITIRKAIS) is a DNA-binding region (H-T-H motif).

Its pathway is carbohydrate metabolism; fructoselysine degradation [regulation]. Functionally, may regulate the transcription of the frlABCDR operon, involved in the utilization of fructoselysine and psicoselysine. This Escherichia coli O157:H7 protein is Probable fructoselysine utilization operon transcriptional repressor (frlR).